The following is a 256-amino-acid chain: Pimeloyl-[acyl-carrier protein] methyl ester esterase (256 aa).

The AB hydrolase-1 domain maps to 15 to 242 (HLVLLHGWGL…AAHAPFISHP (228 aa)). Residues tryptophan 22, 82-83 (SL), and 143-147 (FLALQ) each bind substrate. Serine 82 (nucleophile) is an active-site residue. Catalysis depends on residues aspartate 207 and histidine 235. Histidine 235 contacts substrate.

It belongs to the AB hydrolase superfamily. Carboxylesterase BioH family. In terms of assembly, monomer.

It is found in the cytoplasm. The enzyme catalyses 6-carboxyhexanoyl-[ACP] methyl ester + H2O = 6-carboxyhexanoyl-[ACP] + methanol + H(+). It functions in the pathway cofactor biosynthesis; biotin biosynthesis. In terms of biological role, the physiological role of BioH is to remove the methyl group introduced by BioC when the pimeloyl moiety is complete. It allows to synthesize pimeloyl-ACP via the fatty acid synthetic pathway through the hydrolysis of the ester bonds of pimeloyl-ACP esters. The protein is Pimeloyl-[acyl-carrier protein] methyl ester esterase of Escherichia coli O17:K52:H18 (strain UMN026 / ExPEC).